The chain runs to 655 residues: Import motor subunit, mitochondrial (655 aa).

A mitochondrion-targeting transit peptide spans 1–23 (MLAAKNILNRSSLSSSFRIATRL). Position 330 is a phosphothreonine (Thr330). The interval 629 to 655 (EQLYKNDSNNNNNNNNGNNAESDETKQ) is disordered. The span at 637–647 (NNNNNNNNGNN) shows a compositional bias: low complexity.

This sequence belongs to the heat shock protein 70 family. Component of the PAM complex, at least composed of SSC1 (mtHsp70), MGE1, TIM44, PAM16/TIM16, PAM17 and PAM18/TIM14. In the complex, SSC1 interacts directly with PAM18 and TIM44. Interacts with NAP1. Component of endonuclease SceI (endo.SceI), which is a heterodimer of ENS2 and SSC1.

Its subcellular location is the mitochondrion matrix. It carries out the reaction ATP + H2O = ADP + phosphate + H(+). Essential component of the PAM complex, a complex required for the translocation of transit peptide-containing proteins from the inner membrane into the mitochondrial matrix in an ATP-dependent manner. Constitutes the ATP-driven core of the motor and binds the precursor preprotein. Required for the import of the processed frataxin homolog YFH1 into the mitochondrion. Functionally, acts as a non-catalytic component of endonuclease SceI (endo.SceI), which cleaves specifically at multiple sites on mitochondrial DNA and produces double-stranded breaks. SSC1 confers broader sequence specificity, greater stability, and higher activity on the catalytic subunit. The sequence is that of Import motor subunit, mitochondrial from Saccharomyces cerevisiae (Baker's yeast).